Consider the following 304-residue polypeptide: Putative S-adenosyl-L-methionine-dependent methyltransferase MAV_4444 (304 aa).

S-adenosyl-L-methionine-binding positions include aspartate 130 and 159–160 (DL).

The protein belongs to the UPF0677 family.

Its function is as follows. Exhibits S-adenosyl-L-methionine-dependent methyltransferase activity. This is Putative S-adenosyl-L-methionine-dependent methyltransferase MAV_4444 from Mycobacterium avium (strain 104).